We begin with the raw amino-acid sequence, 77 residues long: Translation initiation factor IF-1, chloroplastic (77 aa).

One can recognise an S1-like domain in the interval 1–71 (MKEQKLIHEG…TRGRIIYRLR (71 aa)).

This sequence belongs to the IF-1 family. Component of the 30S ribosomal translation pre-initiation complex which assembles on the 30S ribosome in the order IF-2 and IF-3, IF-1 and N-formylmethionyl-tRNA(fMet); mRNA recruitment can occur at any time during PIC assembly.

The protein localises to the plastid. It localises to the chloroplast. One of the essential components for the initiation of protein synthesis. Stabilizes the binding of IF-2 and IF-3 on the 30S subunit to which N-formylmethionyl-tRNA(fMet) subsequently binds. Helps modulate mRNA selection, yielding the 30S pre-initiation complex (PIC). Upon addition of the 50S ribosomal subunit IF-1, IF-2 and IF-3 are released leaving the mature 70S translation initiation complex. The polypeptide is Translation initiation factor IF-1, chloroplastic (Liriodendron tulipifera (Tuliptree)).